We begin with the raw amino-acid sequence, 731 residues long: E3 ubiquitin-protein ligase SMURF1 (731 aa).

Residues 1 to 120 form the C2 domain; the sequence is MSNVVTRRGG…TGYQRLDLCK (120 aa). The disordered stretch occupies residues 210–235; the sequence is RVRGPEVREHVQTPQNRSHGFQSQDL. Residues 221–234 show a composition bias toward polar residues; sequence QTPQNRSHGFQSQD. WW domains are found at residues 233-266 and 279-312; these read QDLP…DPRI and GSLP…DPRL. The region spanning 394–731 is the HECT domain; it reads RPKDLKKRLM…VEETSGFAVE (338 aa). The active-site Glycyl thioester intermediate is Cys699.

The protein resides in the cytoplasm. It localises to the cell membrane. It carries out the reaction S-ubiquitinyl-[E2 ubiquitin-conjugating enzyme]-L-cysteine + [acceptor protein]-L-lysine = [E2 ubiquitin-conjugating enzyme]-L-cysteine + N(6)-ubiquitinyl-[acceptor protein]-L-lysine.. It participates in protein modification; protein ubiquitination. Functionally, E3 ubiquitin-protein ligase that acts as a negative regulator of BMP signaling pathway. Mediates ubiquitination and degradation of smad1 and smad5, 2 receptor-regulated SMADs specific for the BMP pathway. Promotes ubiquitination and subsequent proteasomal degradation of TRAF family members and rhoa. May play a role in dendrite formation by melanocytes. The chain is E3 ubiquitin-protein ligase SMURF1 (smurf1) from Xenopus laevis (African clawed frog).